Here is a 157-residue protein sequence, read N- to C-terminus: Capsid protein (157 aa).

N-acetylserine; by host is present on S2.

The protein belongs to the virgaviridae capsid protein family.

The protein resides in the virion. In terms of biological role, capsid protein self-assembles to form rod-shaped virions about 18 nm in diameter with a central canal enclosing the viral genomic RNA. The protein is Capsid protein (CP) of Brassicaceae (TVCV).